The primary structure comprises 199 residues: Imidazoleglycerol-phosphate dehydratase (199 aa).

It belongs to the imidazoleglycerol-phosphate dehydratase family.

It localises to the cytoplasm. It carries out the reaction D-erythro-1-(imidazol-4-yl)glycerol 3-phosphate = 3-(imidazol-4-yl)-2-oxopropyl phosphate + H2O. The protein operates within amino-acid biosynthesis; L-histidine biosynthesis; L-histidine from 5-phospho-alpha-D-ribose 1-diphosphate: step 6/9. This Kineococcus radiotolerans (strain ATCC BAA-149 / DSM 14245 / SRS30216) protein is Imidazoleglycerol-phosphate dehydratase.